Consider the following 348-residue polypeptide: Major outer membrane protein P.IB (348 aa).

The signal sequence occupies residues 1 to 19 (MKKSLIALTLAALPVAATA).

This sequence belongs to the Gram-negative porin family. Homotrimer.

It is found in the cell outer membrane. In terms of biological role, serves as a slightly cation selective porin. Major antigen on the gonococcal cell surface and it may have pathogenic properties in addition to its porin activity. The protein is Major outer membrane protein P.IB (porB) of Neisseria gonorrhoeae.